The chain runs to 444 residues: Zinc protease PqqE (444 aa).

The signal sequence occupies residues 1–28; the sequence is MKHFSVKRLLGLSSVLLVTLGASMHAQS. His78 contacts Zn(2+). Glu81 serves as the catalytic Proton acceptor. Residues His82 and Glu158 each coordinate Zn(2+).

Belongs to the peptidase M16 family. Zn(2+) is required as a cofactor.

The protein resides in the secreted. Can function alone, but full activity requires the presence of the non-peptidase homolog YmxG. Functionally, virulence factor that cleaves the cytoplasmic domain of the human junctional adhesion molecule A (JAM-A), compromising gastric epithelial barrier function and cell-cell adhesion. Cleavage of JAM-A occurs after Ala-285 or, to a lesser extent, before Ala-285. In Helicobacter pylori (strain ATCC 700392 / 26695) (Campylobacter pylori), this protein is Zinc protease PqqE.